Reading from the N-terminus, the 166-residue chain is Cyclin-dependent kinase 4 inhibitor D (166 aa).

At Met1 the chain carries N-acetylmethionine. ANK repeat units lie at residues 41 to 69, 73 to 102, 106 to 135, and 138 to 166; these read FGKT…SPNV, SGTS…DVNV, TGAL…LHRR, and RGLT…VAPL.

The protein belongs to the CDKN2 cyclin-dependent kinase inhibitor family. As to quaternary structure, interacts with CDK6.

Its subcellular location is the nucleus. The protein localises to the cytoplasm. Interacts strongly with CDK4 and CDK6 and inhibits them. The sequence is that of Cyclin-dependent kinase 4 inhibitor D (CDKN2D) from Homo sapiens (Human).